The primary structure comprises 160 residues: Lipoprotein signal peptidase (160 aa).

Transmembrane regions (helical) follow at residues 13–33 (IYITTIIFILILDISSKHLII), 72–92 (WFLSTVSILTILVMTRIITKL), and 104–124 (SLIIAGATGNLIDRIFYGFVV). Active-site residues include aspartate 125 and aspartate 143. The helical transmembrane segment at 134–154 (WHFATFNIADCSIFIGIIILM) threads the bilayer.

Belongs to the peptidase A8 family.

It is found in the cell inner membrane. The enzyme catalyses Release of signal peptides from bacterial membrane prolipoproteins. Hydrolyzes -Xaa-Yaa-Zaa-|-(S,diacylglyceryl)Cys-, in which Xaa is hydrophobic (preferably Leu), and Yaa (Ala or Ser) and Zaa (Gly or Ala) have small, neutral side chains.. Its pathway is protein modification; lipoprotein biosynthesis (signal peptide cleavage). Its function is as follows. This protein specifically catalyzes the removal of signal peptides from prolipoproteins. This is Lipoprotein signal peptidase from Buchnera aphidicola subsp. Acyrthosiphon pisum (strain Tuc7).